The sequence spans 127 residues: Major sperm protein 33 (127 aa).

Residue Ala-2 is modified to N-acetylalanine. Positions 9–126 constitute an MSP domain; the sequence is DIQTQPGTKI…RRKNLPIEYN (118 aa).

In terms of tissue distribution, sperm.

The protein resides in the cell projection. It localises to the pseudopodium. It is found in the cytoplasm. Its subcellular location is the cytoskeleton. In terms of biological role, central component in molecular interactions underlying sperm crawling. Forms an extensive filament system that extends from sperm villipoda, along the leading edge of the pseudopod. This chain is Major sperm protein 33 (msp-33), found in Caenorhabditis elegans.